The chain runs to 424 residues: Anaerobic glycerol-3-phosphate dehydrogenase subunit B (424 aa).

The protein belongs to the anaerobic G-3-P dehydrogenase subunit B family. Composed of a catalytic GlpA/B dimer and of membrane bound GlpC. It depends on FMN as a cofactor.

It catalyses the reaction a quinone + sn-glycerol 3-phosphate = dihydroxyacetone phosphate + a quinol. Its pathway is polyol metabolism; glycerol degradation via glycerol kinase pathway; glycerone phosphate from sn-glycerol 3-phosphate (anaerobic route): step 1/1. In terms of biological role, conversion of glycerol 3-phosphate to dihydroxyacetone. Uses fumarate or nitrate as electron acceptor. The sequence is that of Anaerobic glycerol-3-phosphate dehydrogenase subunit B from Yersinia pseudotuberculosis serotype I (strain IP32953).